Consider the following 293-residue polypeptide: Ribosomal RNA small subunit methyltransferase A (293 aa).

S-adenosyl-L-methionine contacts are provided by N29, L31, G56, E77, D102, and N127.

Belongs to the class I-like SAM-binding methyltransferase superfamily. rRNA adenine N(6)-methyltransferase family. RsmA subfamily.

The protein resides in the cytoplasm. The catalysed reaction is adenosine(1518)/adenosine(1519) in 16S rRNA + 4 S-adenosyl-L-methionine = N(6)-dimethyladenosine(1518)/N(6)-dimethyladenosine(1519) in 16S rRNA + 4 S-adenosyl-L-homocysteine + 4 H(+). Specifically dimethylates two adjacent adenosines (A1518 and A1519) in the loop of a conserved hairpin near the 3'-end of 16S rRNA in the 30S particle. May play a critical role in biogenesis of 30S subunits. The sequence is that of Ribosomal RNA small subunit methyltransferase A from Lysinibacillus sphaericus (strain C3-41).